The sequence spans 215 residues: Meiotic chromosome segregation protein P8B7.28c (215 aa).

The tract at residues 159-202 is disordered; the sequence is TINSEYADDVSDNTDEERTESKGQQESNSAEEYDDDDSDEDRME. 2 stretches are compositionally biased toward acidic residues: residues 164 to 176 and 187 to 201; these read YADD…DEER and SAEE…EDRM.

It localises to the nucleus. The protein resides in the nucleolus. In terms of biological role, required for meiotic chromosome segregation. The polypeptide is Meiotic chromosome segregation protein P8B7.28c (Schizosaccharomyces pombe (strain 972 / ATCC 24843) (Fission yeast)).